We begin with the raw amino-acid sequence, 41 residues long: Large ribosomal subunit protein bL36 (41 aa).

The protein belongs to the bacterial ribosomal protein bL36 family.

In Pelagibacter ubique (strain HTCC1062), this protein is Large ribosomal subunit protein bL36.